The following is a 364-amino-acid chain: Ribosomal RNA large subunit methyltransferase F (364 aa).

Low complexity predominate over residues 1-17; the sequence is MPKPAIKTAAKPATSSA. The disordered stretch occupies residues 1–53; that stretch reads MPKPAIKTAAKPATSSAGKRGKPNTPKSVAKPKTAKPKTASKPKVKPGEKKRL. Over residues 33–53 the composition is skewed to basic residues; it reads KTAKPKTASKPKVKPGEKKRL.

Belongs to the methyltransferase superfamily. METTL16/RlmF family.

The protein localises to the cytoplasm. The catalysed reaction is adenosine(1618) in 23S rRNA + S-adenosyl-L-methionine = N(6)-methyladenosine(1618) in 23S rRNA + S-adenosyl-L-homocysteine + H(+). Specifically methylates the adenine in position 1618 of 23S rRNA. The protein is Ribosomal RNA large subunit methyltransferase F of Shewanella sp. (strain MR-7).